The sequence spans 51 residues: Sperm protamine P1 (51 aa).

The protein belongs to the protamine P1 family. In terms of tissue distribution, testis.

It localises to the nucleus. It is found in the chromosome. Protamines substitute for histones in the chromatin of sperm during the haploid phase of spermatogenesis. They compact sperm DNA into a highly condensed, stable and inactive complex. This Trachypithecus cristatus (Silvered leaf-monkey) protein is Sperm protamine P1 (PRM1).